Consider the following 238-residue polypeptide: Tetrahydromethanopterin S-methyltransferase subunit A 1 (238 aa).

Topologically, residues 2 to 218 (VEKKSPAEGW…RMFAGMYSGK (217 aa)) are cytoplasmic. A 5-hydroxybenzimidazolylcob(I)amide-binding site is contributed by His84. A helical transmembrane segment spans residues 219 to 237 (VQGIMIGLAFTLTLGILLL). Val238 is a topological domain (extracellular).

This sequence belongs to the MtrA family. In terms of assembly, the complex is composed of 8 subunits; MtrA, MtrB, MtrC, MtrD, MtrE, MtrF, MtrG and MtrH. 5-hydroxybenzimidazolylcob(I)amide is required as a cofactor.

It localises to the cell membrane. It carries out the reaction 5-methyl-5,6,7,8-tetrahydromethanopterin + coenzyme M + 2 Na(+)(in) = 5,6,7,8-tetrahydromethanopterin + methyl-coenzyme M + 2 Na(+)(out). Its pathway is one-carbon metabolism; methanogenesis from CO(2); methyl-coenzyme M from 5,10-methylene-5,6,7,8-tetrahydromethanopterin: step 2/2. Its function is as follows. Part of a complex that catalyzes the formation of methyl-coenzyme M and tetrahydromethanopterin from coenzyme M and methyl-tetrahydromethanopterin. This is an energy-conserving, sodium-ion translocating step. This chain is Tetrahydromethanopterin S-methyltransferase subunit A 1, found in Methanothermobacter marburgensis (strain ATCC BAA-927 / DSM 2133 / JCM 14651 / NBRC 100331 / OCM 82 / Marburg) (Methanobacterium thermoautotrophicum).